The chain runs to 232 residues: Phosphatidylserine decarboxylase proenzyme (232 aa).

The active-site Schiff-base intermediate with substrate; via pyruvic acid is the S190. A Pyruvic acid (Ser); by autocatalysis modification is found at S190.

The protein belongs to the phosphatidylserine decarboxylase family. PSD-A subfamily. As to quaternary structure, heterodimer of a large membrane-associated beta subunit and a small pyruvoyl-containing alpha subunit. It depends on pyruvate as a cofactor. Post-translationally, is synthesized initially as an inactive proenzyme. Formation of the active enzyme involves a self-maturation process in which the active site pyruvoyl group is generated from an internal serine residue via an autocatalytic post-translational modification. Two non-identical subunits are generated from the proenzyme in this reaction, and the pyruvate is formed at the N-terminus of the alpha chain, which is derived from the carboxyl end of the proenzyme. The post-translation cleavage follows an unusual pathway, termed non-hydrolytic serinolysis, in which the side chain hydroxyl group of the serine supplies its oxygen atom to form the C-terminus of the beta chain, while the remainder of the serine residue undergoes an oxidative deamination to produce ammonia and the pyruvoyl prosthetic group on the alpha chain.

The protein localises to the cell membrane. The enzyme catalyses a 1,2-diacyl-sn-glycero-3-phospho-L-serine + H(+) = a 1,2-diacyl-sn-glycero-3-phosphoethanolamine + CO2. It participates in phospholipid metabolism; phosphatidylethanolamine biosynthesis; phosphatidylethanolamine from CDP-diacylglycerol: step 2/2. Its function is as follows. Catalyzes the formation of phosphatidylethanolamine (PtdEtn) from phosphatidylserine (PtdSer). This chain is Phosphatidylserine decarboxylase proenzyme, found in Rhizobium etli (strain CIAT 652).